The sequence spans 316 residues: HPr kinase/phosphorylase (316 aa).

Catalysis depends on residues His146 and Lys167. Residue 161 to 168 (GESGLGKS) participates in ATP binding. Residue Ser168 coordinates Mg(2+). Asp185 acts as the Proton acceptor; for phosphorylation activity. Proton donor; for dephosphorylation activity in catalysis. Residues 209–218 (LEVRGIGLLD) are important for the catalytic mechanism of both phosphorylation and dephosphorylation. Glu210 is a binding site for Mg(2+). Arg252 is a catalytic residue. The segment at 273 to 278 (QVEAGR) is important for the catalytic mechanism of dephosphorylation.

This sequence belongs to the HPrK/P family. Homohexamer. Mg(2+) serves as cofactor.

It catalyses the reaction [HPr protein]-L-serine + ATP = [HPr protein]-O-phospho-L-serine + ADP + H(+). It carries out the reaction [HPr protein]-O-phospho-L-serine + phosphate + H(+) = [HPr protein]-L-serine + diphosphate. Functionally, catalyzes the ATP- as well as the pyrophosphate-dependent phosphorylation of a specific serine residue in HPr, a phosphocarrier protein of the phosphoenolpyruvate-dependent sugar phosphotransferase system (PTS). HprK/P also catalyzes the pyrophosphate-producing, inorganic phosphate-dependent dephosphorylation (phosphorolysis) of seryl-phosphorylated HPr (P-Ser-HPr). The protein is HPr kinase/phosphorylase of Polaromonas sp. (strain JS666 / ATCC BAA-500).